A 300-amino-acid polypeptide reads, in one-letter code: GTPase Era (300 aa).

Residues 8–176 (RCGYVAIVGR…ERLVAGRLPQ (169 aa)) enclose the Era-type G domain. A G1 region spans residues 16–23 (GRPNVGKS). Residue 16-23 (GRPNVGKS) coordinates GTP. The tract at residues 42-46 (QTTRH) is G2. Residues 63 to 66 (DTPG) are G3. Residues 63-67 (DTPGL) and 125-128 (NKAD) each bind GTP. The interval 125 to 128 (NKAD) is G4. The segment at 155–157 (ISA) is G5. The region spanning 199–283 (VREKIMRQLG…MLNLWVKVKG (85 aa)) is the KH type-2 domain.

This sequence belongs to the TRAFAC class TrmE-Era-EngA-EngB-Septin-like GTPase superfamily. Era GTPase family. Monomer.

The protein localises to the cytoplasm. The protein resides in the cell inner membrane. Its function is as follows. An essential GTPase that binds both GDP and GTP, with rapid nucleotide exchange. Plays a role in 16S rRNA processing and 30S ribosomal subunit biogenesis and possibly also in cell cycle regulation and energy metabolism. The polypeptide is GTPase Era (Azotobacter vinelandii (strain DJ / ATCC BAA-1303)).